The sequence spans 910 residues: Protein translocase subunit SecA (910 aa).

ATP is bound by residues Gln-89, 107 to 111 (GEGKT), and Asp-496. Residues 873–910 (QEFSGGNLNRSQSNGSSVTVTTSSGGGTERKTSRRRKR) are disordered. A compositionally biased stretch (polar residues) spans 876-886 (SGGNLNRSQSN).

It belongs to the SecA family. In terms of assembly, monomer and homodimer. Part of the essential Sec protein translocation apparatus which comprises SecA, SecYEG and auxiliary proteins SecDF. Other proteins may also be involved.

It is found in the cell inner membrane. It localises to the cytoplasm. It carries out the reaction ATP + H2O + cellular proteinSide 1 = ADP + phosphate + cellular proteinSide 2.. Functionally, part of the Sec protein translocase complex. Interacts with the SecYEG preprotein conducting channel. Has a central role in coupling the hydrolysis of ATP to the transfer of proteins into and across the cell membrane, serving as an ATP-driven molecular motor driving the stepwise translocation of polypeptide chains across the membrane. This chain is Protein translocase subunit SecA, found in Leptospira interrogans serogroup Icterohaemorrhagiae serovar copenhageni (strain Fiocruz L1-130).